We begin with the raw amino-acid sequence, 1014 residues long: Resistance to glucose repression protein 1 (1014 aa).

Residues 1 to 63 (MSTNLANYFA…AVQAKNDDDF (63 aa)) form a disordered region. S2 bears the N-acetylserine mark. Residues 11–34 (GKKDIENEHVNRNASHESNSKSDV) show a composition bias toward basic and acidic residues. T73 carries the phosphothreonine modification. S75 bears the Phosphoserine mark. Disordered regions lie at residues 90 to 144 (LGRS…YLIP) and 236 to 270 (SEGNAQSEEEHDLERGYGSDDENSKRISMPTKNSK). Over residues 104 to 115 (YDNSSNNSSSNS) the composition is skewed to low complexity. Phosphoserine is present on residues S242 and S254. Residues 247 to 260 (DLERGYGSDDENSK) show a composition bias toward basic and acidic residues. The Nuclear localization signal motif lies at 277-283 (KPILKKR). Residue S311 is modified to Phosphoserine. Residues 340–463 (YPKESNSSVS…SEKSNKPTKN (124 aa)) form a disordered region. Polar residues-rich tracts occupy residues 343 to 352 (ESNSSVSLKS), 361 to 370 (STIPNPVGEN), 389 to 407 (HVQNNRSTAQSNKSILENS), and 415 to 455 (LDQN…NPSE). S421 carries the post-translational modification Phosphoserine. Y480 carries the phosphotyrosine modification. At S490 the chain carries Phosphoserine. Disordered regions lie at residues 531–557 (EHLNKNTSDDDTSSQSSSSSHSDDEEH) and 570–591 (SDSGVHSPITDNSSVASSTTSR). S570, S572, and S576 each carry phosphoserine. Residues 578–591 (ITDNSSVASSTTSR) are compositionally biased toward polar residues. The Nuclear localization signal motif lies at 595-599 (RPIIK). Residues S610, S614, and S680 each carry the phosphoserine modification. The disordered stretch occupies residues 690 to 897 (SKEKHVPQLH…QSFRIVNNTP (208 aa)). Over residues 722–740 (YSSSSDSEQQFIEDSQYNS) the composition is skewed to low complexity. A compositionally biased stretch (acidic residues) spans 741–758 (SDDEEEEDDDDQEVDDNH). Polar residues-rich tracts occupy residues 770-802 (LGKSGSTNSLYDLAQPSLSSATPQQKNPTNFTG) and 822-833 (RNSSSGNFIFNS). Positions 873–879 (KKKALPK) match the Nuclear localization signal motif. A compositionally biased stretch (polar residues) spans 884–897 (SDSSQSFRIVNNTP). The residue at position 896 (T896) is a Phosphothreonine. Position 898 is a phosphoserine (S898). Residues 959–972 (KKVDSVQTTRKEAS) show a composition bias toward basic and acidic residues. Residues 959-982 (KKVDSVQTTRKEASLTDSSNESLH) are disordered. S980 carries the post-translational modification Phosphoserine.

In terms of assembly, interacts with SAK1.

The protein localises to the nucleus. Involved in RNA processing and negative regulation of glucose repression. Regulates the level of two antigens, P43 and P70. Binds to protein phosphatase type 1. Functions with REG2 and SNF1 protein kinase to regulate growth. Might regulate SNF1 directly or indirectly. The sequence is that of Resistance to glucose repression protein 1 (REG1) from Saccharomyces cerevisiae (strain ATCC 204508 / S288c) (Baker's yeast).